A 396-amino-acid polypeptide reads, in one-letter code: Lipopolysaccharide assembly protein B (396 aa).

The helical transmembrane segment at 1 to 20 threads the bilayer; sequence MIELLFLLLPIAAAYGWYMG. Topologically, residues 21-396 are cytoplasmic; the sequence is RRSAKKDQDD…IKPVSNQEHN (376 aa). TPR repeat units lie at residues 35–68, 77–109, 149–182, and 221–254; these read LSRD…QEIE, FEAE…SPNY, ENAL…KPQE, and VRAS…NPDY. Residues cysteine 364, cysteine 367, cysteine 378, and cysteine 381 each coordinate Fe cation.

This sequence belongs to the LapB family.

The protein localises to the cell inner membrane. Modulates cellular lipopolysaccharide (LPS) levels by regulating LpxC, which is involved in lipid A biosynthesis. May act by modulating the proteolytic activity of FtsH towards LpxC. May also coordinate assembly of proteins involved in LPS synthesis at the plasma membrane. In Haemophilus influenzae (strain ATCC 51907 / DSM 11121 / KW20 / Rd), this protein is Lipopolysaccharide assembly protein B.